The primary structure comprises 468 residues: 3-isopropylmalate dehydratase large subunit (468 aa).

The [4Fe-4S] cluster site is built by Cys-346, Cys-406, and Cys-409.

Belongs to the aconitase/IPM isomerase family. LeuC type 1 subfamily. In terms of assembly, heterodimer of LeuC and LeuD. Requires [4Fe-4S] cluster as cofactor.

The catalysed reaction is (2R,3S)-3-isopropylmalate = (2S)-2-isopropylmalate. The protein operates within amino-acid biosynthesis; L-leucine biosynthesis; L-leucine from 3-methyl-2-oxobutanoate: step 2/4. Catalyzes the isomerization between 2-isopropylmalate and 3-isopropylmalate, via the formation of 2-isopropylmaleate. The polypeptide is 3-isopropylmalate dehydratase large subunit (Cyanothece sp. (strain PCC 7425 / ATCC 29141)).